Here is a 455-residue protein sequence, read N- to C-terminus: DENN domain-containing protein 11 (455 aa).

Val-2 bears the N-acetylvaline mark. Residues 15–187 form the uDENN domain; sequence EGPAVSVPQD…QLEMPGHYSH (173 aa). The segment at 21–61 is disordered; sequence VPQDPALQAGGWVRGGSGGGRVAAEAPRRREPEEPAPPEVL. A compositionally biased stretch (gly residues) spans 32-41; it reads WVRGGSGGGR. Position 41 is an omega-N-methylarginine (Arg-41). One can recognise a cDENN domain in the interval 214–362; sequence WLPSIHRYMY…LNSADREKYR (149 aa). The region spanning 364–455 is the dDENN domain; that stretch reads LNEQRQMLLY…MLVIDNPCCP (92 aa).

Belongs to the DENND11 family. Expressed within the somatodendritic compartment of neurons, is also present on dendritic growth cones, but is not found in astrocytes.

Functionally, probable guanine nucleotide exchange factor (GEF). May promote the exchange of GDP to GTP, converting inactive GDP-bound small GTPases into their active GTP-bound form. May play a role in neuritogenesis, as well as in neuronal recovery and/or restructuring in the hippocampus following transient cerebral ischemia. The protein is DENN domain-containing protein 11 (Dennd11) of Rattus norvegicus (Rat).